Consider the following 226-residue polypeptide: Probable transaldolase (226 aa).

Lys91 (schiff-base intermediate with substrate) is an active-site residue.

It belongs to the transaldolase family. Type 3B subfamily.

The protein localises to the cytoplasm. It catalyses the reaction D-sedoheptulose 7-phosphate + D-glyceraldehyde 3-phosphate = D-erythrose 4-phosphate + beta-D-fructose 6-phosphate. It participates in carbohydrate degradation; pentose phosphate pathway; D-glyceraldehyde 3-phosphate and beta-D-fructose 6-phosphate from D-ribose 5-phosphate and D-xylulose 5-phosphate (non-oxidative stage): step 2/3. Functionally, transaldolase is important for the balance of metabolites in the pentose-phosphate pathway. In Chlorobium phaeobacteroides (strain DSM 266 / SMG 266 / 2430), this protein is Probable transaldolase.